The following is a 438-amino-acid chain: MSEASGRAAGNEMPAKKQKLSSDENSNPELSGDENDDSVSIESGTNTERPDTPTNAANAPGRKAWGKGKWKSKKCKYSFKCVNSLKEDHNQPLFGVQFNWHSKEGDPLVFATVGSNRVTLYECHPQGDIRLLQSYVDADADENFYTCAWTYDSNTSHPLLAVAGSRGIIRIINPITMQCIKHYVGHGNAINELKFHPRDPNLLLSVSKDHALRLWNIQTDTLVAIFGGVEGHRDEVLSADYDLLGEKIMSCGMDHSLKLWRINSLRMKTAIKESYEYNPSKTNRPFVSQKIHFPDFSTRDIHRNYVDCVRWLGDLILSKSCENAIVCWKPGKMEDDIDKIKPSESNVTILGRFDYSQCDIWYMRFSMDFWQKMLALGNQVGKLYVWDLEAEDPHKAKCTTLTYPKCASAVRQTSFSRDSSILVAVCDDATIWRWDRLR.

The interval M1–K67 is disordered. Residues S40 to A57 are compositionally biased toward polar residues. WD repeat units lie at residues D88 to L131, D139 to H182, G185 to I225, G231 to A270, I301 to D338, S356 to A396, and K405 to R438.

This sequence belongs to the WD repeat ESC family. Component of the prc2/eed-ezh2 complex. Interacts with yy1. Can interact with ezh2, hdac1 and taf9.

It localises to the nucleus. Functionally, polycomb group (PcG) protein. Component of the prc2/eed-ezh2 complex, which methylates 'Lys-9' and 'Lys-27' of histone H3, leading to transcriptional repression of the affected target gene. The protein is Polycomb protein eed-A (eed-a) of Xenopus laevis (African clawed frog).